A 519-amino-acid chain; its full sequence is Chaperone SurA (519 aa).

The N-terminal stretch at 1–31 (MMRSLHSLRRMSGTVLALMLAAGLPLSAAQA) is a signal peptide. Low complexity-rich tracts occupy residues 31–45 (AQPA…QKPA) and 197–207 (PAAAQATRAPA). Disordered stretches follow at residues 31-50 (AQPA…PAPS) and 196-221 (NPAA…PAQS). The region spanning 223-324 (PAMLVLAQIL…NGFHILKVVD (102 aa)) is the PpiC 1 domain. The disordered stretch occupies residues 328-361 (GGQPAQAARPAPAPAPQQPSSFQEGPSVAAPQGP). The PpiC 2 domain maps to 364 to 463 (VTQTHARHIL…FGWHLIQVLE (100 aa)).

The protein localises to the periplasm. The enzyme catalyses [protein]-peptidylproline (omega=180) = [protein]-peptidylproline (omega=0). Its function is as follows. Chaperone involved in the correct folding and assembly of outer membrane proteins. Recognizes specific patterns of aromatic residues and the orientation of their side chains, which are found more frequently in integral outer membrane proteins. May act in both early periplasmic and late outer membrane-associated steps of protein maturation. The sequence is that of Chaperone SurA from Bordetella parapertussis (strain 12822 / ATCC BAA-587 / NCTC 13253).